An 82-amino-acid polypeptide reads, in one-letter code: Turripeptide IX-04 (82 aa).

An N-terminal signal peptide occupies residues 1–21 (MGFYMLLTVALLLTSLMNVEA). Positions 22–39 (TPVDQAERSALEKSGLGN) are excised as a propeptide. Disulfide bonds link Cys-48/Cys-70, Cys-55/Cys-74, and Cys-60/Cys-81.

In terms of tissue distribution, expressed by the venom duct.

The protein localises to the secreted. The protein is Turripeptide IX-04 of Gemmula speciosa (Splendid gem-turris).